Here is a 327-residue protein sequence, read N- to C-terminus: Malate dehydrogenase (327 aa).

An NAD(+)-binding site is contributed by 11-17; the sequence is GAAGQIG. The substrate site is built by R92 and R98. Residues N105, Q112, and 129-131 contribute to the NAD(+) site; that span reads VGN. Substrate-binding residues include N131 and R162. Catalysis depends on H187, which acts as the Proton acceptor.

Belongs to the LDH/MDH superfamily. MDH type 2 family.

It catalyses the reaction (S)-malate + NAD(+) = oxaloacetate + NADH + H(+). In terms of biological role, catalyzes the reversible oxidation of malate to oxaloacetate. In Thermus thermophilus (strain ATCC BAA-163 / DSM 7039 / HB27), this protein is Malate dehydrogenase.